Consider the following 243-residue polypeptide: Triosephosphate isomerase (243 aa).

9-11 is a binding site for substrate; it reads NWK. Catalysis depends on H96, which acts as the Electrophile. The active-site Proton acceptor is E165. Substrate contacts are provided by residues G171, S204, and 225-226; that span reads GG.

The protein belongs to the triosephosphate isomerase family. As to quaternary structure, homodimer.

The protein localises to the cytoplasm. It carries out the reaction D-glyceraldehyde 3-phosphate = dihydroxyacetone phosphate. The protein operates within carbohydrate biosynthesis; gluconeogenesis. It functions in the pathway carbohydrate degradation; glycolysis; D-glyceraldehyde 3-phosphate from glycerone phosphate: step 1/1. Functionally, involved in the gluconeogenesis. Catalyzes stereospecifically the conversion of dihydroxyacetone phosphate (DHAP) to D-glyceraldehyde-3-phosphate (G3P). The polypeptide is Triosephosphate isomerase (Prochlorococcus marinus (strain SARG / CCMP1375 / SS120)).